Reading from the N-terminus, the 255-residue chain is Small ribosomal subunit protein eS4 (255 aa).

Residues 44-107 enclose the S4 RNA-binding domain; that stretch reads IPLLILVRDV…DEYYRMIPYP (64 aa).

The protein belongs to the eukaryotic ribosomal protein eS4 family.

The sequence is that of Small ribosomal subunit protein eS4 from Ignicoccus hospitalis (strain KIN4/I / DSM 18386 / JCM 14125).